A 228-amino-acid polypeptide reads, in one-letter code: MEEQKKLVSQYAIDHYIKSNMHLGIGTGTTVFYAIKYLSDKIKSGDLKNLKLYPTSSDTKYLLAKENITYESKFTKFSKNIDITIDGADEILLEKKALIKGGGAAHLMEKIIAYNSHQLLIIADETKIVQTLGEKVSVPIEIVPDALPFITANLEKMNFNPVLRTCKFKAGPIITDNNNYILDVKMNIENPKGAEKYFKLLPGILEIGIFNHQNTKVIYYQNGQIKEI.

Substrate contacts are provided by residues threonine 27–threonine 30, aspartate 86–aspartate 89, and lysine 100–glycine 103. Glutamate 109 functions as the Proton acceptor in the catalytic mechanism. Position 127 (lysine 127) interacts with substrate.

It belongs to the ribose 5-phosphate isomerase family. As to quaternary structure, homodimer.

The catalysed reaction is aldehydo-D-ribose 5-phosphate = D-ribulose 5-phosphate. It participates in carbohydrate degradation; pentose phosphate pathway; D-ribose 5-phosphate from D-ribulose 5-phosphate (non-oxidative stage): step 1/1. Functionally, catalyzes the reversible conversion of ribose-5-phosphate to ribulose 5-phosphate. The chain is Ribose-5-phosphate isomerase A from Borrelia hermsii (strain HS1 / DAH).